The primary structure comprises 704 residues: Inhibitor of carbonic anhydrase (704 aa).

The N-terminal stretch at 1-19 (MRLAFCVLLCAGSLGLCLA) is a signal peptide. Transferrin-like domains lie at 25–347 (VRWC…HLRR) and 357–689 (VMWC…NVRQ). Disulfide bonds link C28–C67, C38–C58, C137–C213, C172–C188, C175–C196, C185–C198, C246–C260, C360–C392, C370–C383, C417–C699, C440–C662, C472–C549, C496–C690, C506–C520, C517–C532, and C589–C603. Residue N491 is glycosylated (N-linked (GlcNAc...) asparagine).

This sequence belongs to the transferrin family. Monomer. Interacts (via transferrin-like domain 2) with CA2. N-glycosylated. As to expression, blood plasma (at protein level).

The protein resides in the secreted. Inhibitor for carbonic anhydrase 2 (CA2). Does not bind iron ions. The polypeptide is Inhibitor of carbonic anhydrase (Sus scrofa (Pig)).